A 258-amino-acid chain; its full sequence is Redox-sensing transcriptional repressor Rex (258 aa).

A DNA-binding region (H-T-H motif) is located at residues 26–65 (LYLRALTALSERSVPTVSSEELAAAAGVNSAKLRKDFSYL). Residue 100-105 (GIGNLG) participates in NAD(+) binding. The interval 219 to 258 (AGEEAAADGAAPPVAARKQQRSTGSADQGPDGDVPAVMPA) is disordered. Over residues 225–234 (ADGAAPPVAA) the composition is skewed to low complexity.

This sequence belongs to the transcriptional regulatory Rex family. Homodimer.

It is found in the cytoplasm. In terms of biological role, modulates transcription of respiratory genes in response to changes in cellular NADH/NAD(+) redox state. Binds to the DNA sequence motif 5'-TGTGAACGCGTTCACA-3' in the promoter of the cydABCD operon. May play a general role as a sensor of cellular redox balance. This is Redox-sensing transcriptional repressor Rex from Streptomyces coelicolor (strain ATCC BAA-471 / A3(2) / M145).